Consider the following 425-residue polypeptide: Pre-mRNA-splicing factor PRP46 (425 aa).

WD repeat units lie at residues 111 to 151, 154 to 193, 196 to 235, 238 to 279, 281 to 320, 322 to 360, and 371 to 410; these read GHTG…LKVT, GHIMTVRDICISARHPYMFSASQDKLVKCWDLERNTVVRD, GTLSGVHSVDLHPSLDLIVSAGRDSVVRVWDIRSRSCVLT, GHRG…KTLT, HKRNVRDLAFNPTEFSFASACTDDIRSWKLVDGQLLTNFN, EALGIVNTLACNQDGVLFAGGDTGELSFFDYKTGHKFQK, and ESEKGVLASTFDRTGLRLLTCERDKSIKIWKHIDGATQDS.

This sequence belongs to the WD repeat PRL1/PRL2 family. In terms of assembly, associated with the spliceosome.

Its subcellular location is the cytoplasm. It is found in the nucleus. Its function is as follows. Involved in pre-mRNA splicing and required for cell cycle progression at G2/M. The chain is Pre-mRNA-splicing factor PRP46 (PRP46) from Eremothecium gossypii (strain ATCC 10895 / CBS 109.51 / FGSC 9923 / NRRL Y-1056) (Yeast).